The following is a 340-amino-acid chain: Ephrin-B3 (340 aa).

Residues 1-27 form the signal peptide; sequence MGPPHSGPGGVRVGALLLLGVLGLVSG. An Ephrin RBD domain is found at 28–167; sequence LSLEPVYWNS…TRGMKVLLRV (140 aa). The Extracellular portion of the chain corresponds to 28–226; sequence LSLEPVYWNS…EGPLPPPSMP (199 aa). Cystine bridges form between Cys62–Cys104 and Cys92–Cys156. The tract at residues 168–225 is disordered; that stretch reads GQSPRGGAVPRKPVSEMPMERDRGAAHSLEPGKENLPGDPTSNATSRGAEGPLPPPSM. The span at 185–200 shows a compositional bias: basic and acidic residues; it reads PMERDRGAAHSLEPGK. Residue Asn210 is glycosylated (N-linked (GlcNAc...) asparagine). The helical transmembrane segment at 227–247 threads the bilayer; it reads AVAGAAGGLALLLLGVAGAGG. The Cytoplasmic segment spans residues 248-340; sequence AMCWRRRRAK…QSPPNIYYKV (93 aa). Residues 254–298 are disordered; it reads RRAKPSESRHPGPGSFGRGGSLGLGGGGGMGPREAEPGELGIALR. Residues 267–284 show a composition bias toward gly residues; that stretch reads GSFGRGGSLGLGGGGGMG. Arg271 carries the post-translational modification Omega-N-methylarginine. Ser274 is subject to Phosphoserine. The PDZ-binding motif lies at 338 to 340; sequence YKV.

This sequence belongs to the ephrin family. Interacts with GRIP1 and GRIP2. In terms of assembly, (Microbial infection) Interacts with nipah virus and hendra virus glycoprotein. Highly expressed in brain; expressed in embryonic floor plate, roof plate and hindbrain segments.

Its subcellular location is the membrane. Its function is as follows. Cell surface transmembrane ligand for Eph receptors, a family of receptor tyrosine kinases which are crucial for migration, repulsion and adhesion during neuronal, vascular and epithelial development. Binds promiscuously Eph receptors residing on adjacent cells, leading to contact-dependent bidirectional signaling into neighboring cells. The signaling pathway downstream of the receptor is referred to as forward signaling while the signaling pathway downstream of the ephrin ligand is referred to as reverse signaling. May play a pivotal role in forebrain function. Binds to, and induce the collapse of, commissural axons/growth cones in vitro. May play a role in constraining the orientation of longitudinally projecting axons. (Microbial infection) Acts as a receptor for nipah virus and hendra virus. The protein is Ephrin-B3 (EFNB3) of Homo sapiens (Human).